The sequence spans 216 residues: Phosphatidylserine decarboxylase proenzyme (216 aa).

The Schiff-base intermediate with substrate; via pyruvic acid role is filled by Ser182. A Pyruvic acid (Ser); by autocatalysis modification is found at Ser182.

It belongs to the phosphatidylserine decarboxylase family. PSD-A subfamily. Heterodimer of a large membrane-associated beta subunit and a small pyruvoyl-containing alpha subunit. Pyruvate is required as a cofactor. In terms of processing, is synthesized initially as an inactive proenzyme. Formation of the active enzyme involves a self-maturation process in which the active site pyruvoyl group is generated from an internal serine residue via an autocatalytic post-translational modification. Two non-identical subunits are generated from the proenzyme in this reaction, and the pyruvate is formed at the N-terminus of the alpha chain, which is derived from the carboxyl end of the proenzyme. The post-translation cleavage follows an unusual pathway, termed non-hydrolytic serinolysis, in which the side chain hydroxyl group of the serine supplies its oxygen atom to form the C-terminus of the beta chain, while the remainder of the serine residue undergoes an oxidative deamination to produce ammonia and the pyruvoyl prosthetic group on the alpha chain.

The protein localises to the cell membrane. The enzyme catalyses a 1,2-diacyl-sn-glycero-3-phospho-L-serine + H(+) = a 1,2-diacyl-sn-glycero-3-phosphoethanolamine + CO2. It functions in the pathway phospholipid metabolism; phosphatidylethanolamine biosynthesis; phosphatidylethanolamine from CDP-diacylglycerol: step 2/2. In terms of biological role, catalyzes the formation of phosphatidylethanolamine (PtdEtn) from phosphatidylserine (PtdSer). In Burkholderia pseudomallei (strain 1106a), this protein is Phosphatidylserine decarboxylase proenzyme.